Reading from the N-terminus, the 107-residue chain is MGITEKLDGVAVTTKANVYFDGKCVSHSVRFADGTGKSVGVILPSILTFNTGAPEVMEGVAGSCRVRLKGETTWNTYGAGESYQVPGNSSFDIEVVGEPYHYICHFG.

It belongs to the nucleoside phosphorylase PpnP family.

It catalyses the reaction a purine D-ribonucleoside + phosphate = a purine nucleobase + alpha-D-ribose 1-phosphate. The catalysed reaction is adenosine + phosphate = alpha-D-ribose 1-phosphate + adenine. It carries out the reaction cytidine + phosphate = cytosine + alpha-D-ribose 1-phosphate. The enzyme catalyses guanosine + phosphate = alpha-D-ribose 1-phosphate + guanine. It catalyses the reaction inosine + phosphate = alpha-D-ribose 1-phosphate + hypoxanthine. The catalysed reaction is thymidine + phosphate = 2-deoxy-alpha-D-ribose 1-phosphate + thymine. It carries out the reaction uridine + phosphate = alpha-D-ribose 1-phosphate + uracil. The enzyme catalyses xanthosine + phosphate = alpha-D-ribose 1-phosphate + xanthine. Catalyzes the phosphorolysis of diverse nucleosides, yielding D-ribose 1-phosphate and the respective free bases. Can use uridine, adenosine, guanosine, cytidine, thymidine, inosine and xanthosine as substrates. Also catalyzes the reverse reactions. This is Pyrimidine/purine nucleoside phosphorylase from Azoarcus sp. (strain BH72).